The following is a 169-amino-acid chain: Small ribosomal subunit protein uS5 (169 aa).

The S5 DRBM domain maps to 14-77 (LDDQVVAINR…AAAEKNLITV (64 aa)).

It belongs to the universal ribosomal protein uS5 family. In terms of assembly, part of the 30S ribosomal subunit. Contacts proteins S4 and S8.

Its function is as follows. With S4 and S12 plays an important role in translational accuracy. Functionally, located at the back of the 30S subunit body where it stabilizes the conformation of the head with respect to the body. The chain is Small ribosomal subunit protein uS5 from Limosilactobacillus reuteri (strain DSM 20016) (Lactobacillus reuteri).